The sequence spans 183 residues: CyanoP (183 aa).

A signal peptide spans 1-19 (MLQRFFATALAIFVVLLGG). A lipid anchor (N-palmitoyl cysteine) is attached at Cys20. The S-diacylglycerol cysteine moiety is linked to residue Cys20. Residues Asp31, Asp34, Asp54, His58, Thr63, Glu87, Asp91, His142, Glu163, and Glu164 each coordinate Zn(2+).

The protein belongs to the PsbP family. CyanoP subfamily. In terms of assembly, monomer. Present in very small amounts in PSII. Zn(2+) is required as a cofactor.

The protein resides in the cellular thylakoid membrane. Plays a role in the early stages of photosystem II (PSII) assembly; binds to D2 (psbD) and may facilitate its incorporation into PSII. Present in less than 1% of PSII preparations. The protein is CyanoP of Thermosynechococcus vestitus (strain NIES-2133 / IAM M-273 / BP-1).